The sequence spans 251 residues: Eukaryotic translation initiation factor 3 subunit K (251 aa).

A PCI domain is found at 46–224; it reads FDCYANLALL…VKVPTNKENE (179 aa).

The protein belongs to the eIF-3 subunit K family. As to quaternary structure, component of the eukaryotic translation initiation factor 3 (eIF-3) complex.

Its subcellular location is the cytoplasm. Component of the eukaryotic translation initiation factor 3 (eIF-3) complex, which is involved in protein synthesis of a specialized repertoire of mRNAs and, together with other initiation factors, stimulates binding of mRNA and methionyl-tRNAi to the 40S ribosome. The eIF-3 complex specifically targets and initiates translation of a subset of mRNAs involved in cell proliferation. The protein is Eukaryotic translation initiation factor 3 subunit K of Aspergillus oryzae (strain ATCC 42149 / RIB 40) (Yellow koji mold).